A 154-amino-acid chain; its full sequence is Calmodulin-like protein 4 (154 aa).

4 EF-hand domains span residues 7-42 (EQMV…LGLE), 43-78 (PTDQ…KMKD), 80-115 (DGDE…LGEK), and 116-151 (MTDE…AERK). Ca(2+) contacts are provided by aspartate 20, asparagine 22, aspartate 24, cysteine 26, glutamate 31, aspartate 56, aspartate 58, asparagine 60, glutamate 67, aspartate 93, aspartate 95, asparagine 97, and glutamate 104. At lysine 115 the chain carries N6,N6,N6-trimethyllysine. 5 residues coordinate Ca(2+): aspartate 129, aspartate 131, aspartate 133, glutamine 135, and glutamate 140.

Belongs to the calmodulin family.

Its function is as follows. Potential calcium sensor. In Oryza sativa subsp. japonica (Rice), this protein is Calmodulin-like protein 4 (CML4).